The following is a 216-amino-acid chain: LHFPL tetraspan subfamily member 3 protein (216 aa).

4 helical membrane-spanning segments follow: residues 22-42 (IGVL…VCFV), 96-116 (FFIG…ALFF), 126-146 (ICGW…MIYP), and 177-197 (ILAI…FVLG).

This sequence belongs to the LHFP family.

It is found in the membrane. The chain is LHFPL tetraspan subfamily member 3 protein from Danio rerio (Zebrafish).